We begin with the raw amino-acid sequence, 237 residues long: Lipoprotein-releasing system ATP-binding protein LolD (237 aa).

The 229-residue stretch at 8–236 folds into the ABC transporter domain; the sequence is ISVTDLRKTF…EAIKKSVKTA (229 aa). 40 to 47 is an ATP binding site; the sequence is GKSGSGKS.

This sequence belongs to the ABC transporter superfamily. Lipoprotein translocase (TC 3.A.1.125) family. In terms of assembly, the complex is composed of two ATP-binding proteins (LolD) and two transmembrane proteins (LolC and LolE).

Its subcellular location is the cell inner membrane. In terms of biological role, part of the ABC transporter complex LolCDE involved in the translocation of mature outer membrane-directed lipoproteins, from the inner membrane to the periplasmic chaperone, LolA. Responsible for the formation of the LolA-lipoprotein complex in an ATP-dependent manner. This is Lipoprotein-releasing system ATP-binding protein LolD from Leptospira interrogans serogroup Icterohaemorrhagiae serovar Lai (strain 56601).